We begin with the raw amino-acid sequence, 513 residues long: Dye-decolorizing peroxidase msp1 (513 aa).

Positions 1–20 are cleaved as a signal peptide; that stretch reads MKLFSASVFAAIIASHYASA. The propeptide occupies 21-55; that stretch reads TAHIRAPNVKPRRTNSLLTAPPQQPPLPSAQQAAS. Residues 33 to 52 are disordered; the sequence is RTNSLLTAPPQQPPLPSAQQ. Asp-228 functions as the Proton acceptor in the catalytic mechanism. His-365 provides a ligand contact to heme.

As to quaternary structure, homodimer. The cofactor is heme b.

Its subcellular location is the secreted. The catalysed reaction is Reactive Blue 5 + 2 H2O2 = 2,2'-disulfonyl azobenzene + 3-[(4-amino-6-chloro-1,3,5-triazin-2-yl)amino]benzenesulfonate + phthalate + 2 H2O + 2 H(+). It carries out the reaction 2 a phenolic donor + H2O2 = 2 a phenolic radical donor + 2 H2O. In terms of biological role, manganese-independent peroxidase that is able to convert a large number of compounds, but its physiological substrate is not known. In addition to classic peroxidase substrates (e.g. 2,6-dimethoxyphenol), oxidizes dyes such as Reactive Blue 5. Also degrades beta-carotene. This is Dye-decolorizing peroxidase msp1 from Mycetinis scorodonius (Garlic mushroom).